Here is a 129-residue protein sequence, read N- to C-terminus: Replication initiation control protein YabA (129 aa).

The Zn(2+) site is built by histidine 103, cysteine 105, cysteine 119, and cysteine 122.

Belongs to the YabA family. In terms of assembly, homotetramer. Interacts with both DnaA and DnaN, acting as a bridge between these two proteins. The cofactor is Zn(2+).

It localises to the cytoplasm. The protein localises to the nucleoid. Functionally, involved in control of chromosome replication initiation. Inhibits the cooperative binding of DnaA to the oriC region, thus negatively regulating initiation of chromosome replication. Inhibits the ability of DnaA-ATP to form a helix on DNA; does not disassemble preformed DnaA-DNA helices. Decreases the residence time of DnaA on the chromosome at its binding sites (oriC, replication forks and promoter-binding sites). Tethers DnaA to the replication machinery via the DNA polymerase beta sliding clamp subunit (dnaN). Associates with oriC and other DnaA targets on the chromosome in a DnaA-dependent manner. The sequence is that of Replication initiation control protein YabA from Listeria welshimeri serovar 6b (strain ATCC 35897 / DSM 20650 / CCUG 15529 / CIP 8149 / NCTC 11857 / SLCC 5334 / V8).